The sequence spans 247 residues: ATP synthase subunit a, chloroplastic (247 aa).

Transmembrane regions (helical) follow at residues 36–56 (GQVL…SIFG), 95–115 (VPFI…GALV), 134–154 (INTT…AGFS), 199–219 (LVVG…LMLL), and 220–240 (GLFT…AYIG).

Belongs to the ATPase A chain family. As to quaternary structure, F-type ATPases have 2 components, CF(1) - the catalytic core - and CF(0) - the membrane proton channel. CF(1) has five subunits: alpha(3), beta(3), gamma(1), delta(1), epsilon(1). CF(0) has four main subunits: a, b, b' and c.

The protein localises to the plastid. The protein resides in the chloroplast thylakoid membrane. Its function is as follows. Key component of the proton channel; it plays a direct role in the translocation of protons across the membrane. This chain is ATP synthase subunit a, chloroplastic, found in Mesostigma viride (Green alga).